Here is a 449-residue protein sequence, read N- to C-terminus: UDP-N-acetylmuramoylalanine--D-glutamate ligase (449 aa).

113 to 119 is an ATP binding site; the sequence is GTNGKTT.

This sequence belongs to the MurCDEF family.

The protein localises to the cytoplasm. The enzyme catalyses UDP-N-acetyl-alpha-D-muramoyl-L-alanine + D-glutamate + ATP = UDP-N-acetyl-alpha-D-muramoyl-L-alanyl-D-glutamate + ADP + phosphate + H(+). The protein operates within cell wall biogenesis; peptidoglycan biosynthesis. Cell wall formation. Catalyzes the addition of glutamate to the nucleotide precursor UDP-N-acetylmuramoyl-L-alanine (UMA). The chain is UDP-N-acetylmuramoylalanine--D-glutamate ligase from Gloeothece citriformis (strain PCC 7424) (Cyanothece sp. (strain PCC 7424)).